Consider the following 365-residue polypeptide: MNLAAMDPQTYDAQLEHKRIKLEQAFAQFETPSVEVFASEPANYRMRAEFRMWHDGDDLYYYMFDKVLNEKVRCDQYLPASVLINQMMSALIAELKPNPSLRHKLFQVDFLSTLSGEILVSLLYHRQLDDQWRTNAAALKAKLSSQFNVNIIGRARKQKIDLDKDFVVESLQVNDKTFLYKQIENSFTQPNAKVAVKMLEWAIDVTQDSQGDLLELYCGNGNFSIALAQNFNRVLATELAKPSVEAAQYNIEANGIKNLQIIRMSAEDFSDAMAKKRSFRRLEGIDLDSYVCNTIFVDPPRAGIDPDTLALVQGYERILYISCNPDTLKDNLEQLYKTHRVTQFALFDQFPYTDHMETGVLLERR.

Residues Gln189, Tyr217, Asn222, Glu238, and Asp298 each coordinate S-adenosyl-L-methionine. Catalysis depends on Cys323, which acts as the Nucleophile. Catalysis depends on Glu357, which acts as the Proton acceptor.

This sequence belongs to the class I-like SAM-binding methyltransferase superfamily. RNA M5U methyltransferase family. TrmA subfamily.

The enzyme catalyses uridine(54) in tRNA + S-adenosyl-L-methionine = 5-methyluridine(54) in tRNA + S-adenosyl-L-homocysteine + H(+). It catalyses the reaction uridine(341) in tmRNA + S-adenosyl-L-methionine = 5-methyluridine(341) in tmRNA + S-adenosyl-L-homocysteine + H(+). Dual-specificity methyltransferase that catalyzes the formation of 5-methyluridine at position 54 (m5U54) in all tRNAs, and that of position 341 (m5U341) in tmRNA (transfer-mRNA). The polypeptide is tRNA/tmRNA (uracil-C(5))-methyltransferase (Shewanella sp. (strain W3-18-1)).